A 143-amino-acid polypeptide reads, in one-letter code: Oxoglutarate dehydrogenase inhibitor (143 aa).

A Phosphothreonine modification is found at Thr14. The 50-residue stretch at 68-117 (TTAGRHPESDIFLDDVTVSRRHAEFRINEGEFEVVDVGSLNGTYVNREPR) folds into the FHA domain.

The protein localises to the cytoplasm. An essential component of the PknG signaling pathway. When unphosphorylated, it inhibits the activity of 2-oxoglutarate dehydrogenase. When phosphorylated it does not inhibit 2-oxoglutarate dehydrogenase. The protein is Oxoglutarate dehydrogenase inhibitor (odhI) of Corynebacterium glutamicum (strain ATCC 13032 / DSM 20300 / JCM 1318 / BCRC 11384 / CCUG 27702 / LMG 3730 / NBRC 12168 / NCIMB 10025 / NRRL B-2784 / 534).